The chain runs to 492 residues: Dynein regulatory complex subunit 2 (492 aa).

Coiled-coil stretches lie at residues 16–95 (LTEE…FERV), 256–318 (VQSA…AAQA), and 373–401 (LSEE…HDYS).

Belongs to the DRC2 family. In terms of assembly, component of the nexin-dynein regulatory complex (N-DRC).

It is found in the cytoplasm. It localises to the cytoskeleton. The protein resides in the flagellum basal body. Its subcellular location is the cell projection. The protein localises to the cilium. It is found in the flagellum. It localises to the flagellum axoneme. Functionally, component of the nexin-dynein regulatory complex (N-DRC), a key regulator of ciliary/flagellar motility which maintains the alignment and integrity of the distal axoneme and regulates microtubule sliding in motile axonemes. Plays a critical role in the assembly of N-DRC and also stabilizes the assembly of multiple inner dynein arms and radial spokes. Coassembles with DRC1 to form a central scaffold needed for assembly of the N-DRC and its attachment to the outer doublet microtubules. The protein is Dynein regulatory complex subunit 2 (ccdc65) of Danio rerio (Zebrafish).